The following is a 574-amino-acid chain: MAIRARSWRPPPPPLLLLLLWVTGQAAPVAGLGLGSDSELQIERRFVPEECPRTVRSGDFVRYHYVGTFPDGQKFDSSYDRDSTFNVFVGKGQLIAGMDQALVGMCVNERRFVKIPPKLAYGSDGVSGVIPPDSVLHFDVLLMDIWNSEDQVQIHTYFKPPSCPRTIQVSDFVRYHYNGTFLDGTLFDSSHNRMKTYDTYVGIGWLIPGMDKGLLGMCVGEKRIITIPPFLAYGEDGDGKDIPGQASLVFDVALLDLHNPKDGISIENKVVPENCERRSQSGDFLRYHYNGTLLDGTFFDSSYSRNRTFDTYIGQGYVIPGIDEGLLGVCIGEKRRIVVPPHLGYGEEGRGNIPGSAVLVFDIHVIDFHNPSDSISITSHYKPPDCSVLSKKGDYLKYHYNASLLDGTLLDSTWNLGKTYNIVLGFGQVVLGMDMGLREMCVGEKRTVIIPPHLGYGEAGVDGEVPGSAVLVFDIELLELVAGLPEGYMFVWNGEVSANLFEEIDKDGDGEVLLEEFSEYIHAQVASGKGKLAPGFDAEMIVKNMFTNQDRNGDGKVTAEEFKLKDQETKHDEL.

Residues 1–26 (MAIRARSWRPPPPPLLLLLLWVTGQA) form the signal peptide. PPIase FKBP-type domains are found at residues 58 to 146 (GDFV…MDIW), 170 to 258 (SDFV…LDLH), 282 to 369 (GDFL…IDFH), and 393 to 481 (GDYL…LELV). N-linked (GlcNAc...) asparagine glycans are attached at residues Asn-178, Asn-290, Asn-306, and Asn-401. EF-hand domains are found at residues 492 to 527 (WNGEVSANLFEEIDKDGDGEVLLEEFSEYIHAQVAS) and 537 to 572 (DAEMIVKNMFTNQDRNGDGKVTAEEFKLKDQETKHD). The Ca(2+) site is built by Asp-505, Asp-507, Asp-509, Glu-511, Glu-516, Asp-550, Asn-552, Asp-554, Lys-556, and Glu-561. The Prevents secretion from ER motif lies at 571-574 (HDEL).

In terms of processing, phosphorylated.

It is found in the endoplasmic reticulum. It catalyses the reaction [protein]-peptidylproline (omega=180) = [protein]-peptidylproline (omega=0). With respect to regulation, inhibited by FK506. PPIases accelerate the folding of proteins during protein synthesis. The sequence is that of Peptidyl-prolyl cis-trans isomerase FKBP9 (FKBP9) from Bos taurus (Bovine).